Consider the following 170-residue polypeptide: Non-classical export protein 102 (170 aa).

Over 1-11 (MLAIGDVILRA) the chain is Cytoplasmic. The region spanning 6–141 (DVILRAFNFV…TFIFIASAIF (136 aa)) is the MARVEL domain. Residues 12-32 (FNFVFLVIALGLTGSLAATTI) traverse the membrane as a helical segment. Topologically, residues 33–38 (TQHNPQ) are extracellular. A helical membrane pass occupies residues 39 to 61 (INFAVFAAAFGLLTSSFYGVFAY). Residues 62–76 (FVAAFAWPVILFVFD) are Cytoplasmic-facing. The chain crosses the membrane as a helical span at residues 77–97 (FLNFVFTFAAATAIAAGIRAH). The Extracellular portion of the chain corresponds to 98–125 (SCSNQDYLDDNNIAQGSSGRCRKAQAST). The helical transmembrane segment at 126–146 (AFLYFSTFIFIASAIFSAISL) threads the bilayer. At 147-170 (SKGGLFGHSSRPAPRTGVPTMSQV) the chain is on the cytoplasmic side.

Belongs to the NCE102 family.

The protein resides in the cell membrane. Its function is as follows. Involved in membrane organization. Involved in a novel pathway of export of proteins that lack a cleavable signal sequence. Non-classical export pathway also functions as an alternative clearance/detoxification pathway to eliminate damaged material, when the basic repair pathway is not sufficient. Regulates actin organization and subsequent morphogenesis and pathogenesis. This chain is Non-classical export protein 102, found in Candida albicans (strain SC5314 / ATCC MYA-2876) (Yeast).